Consider the following 185-residue polypeptide: MNWRSEHIWIELLKGSRKRGNFFWACILFLGSLGFLAVGASSYLGKNIISVLPSQQILFFPQGVVMSFYGIAGLFISAYLWCTILWNVGSGYDRFDRKEGVVCIFRWGFPGIKRRVFLRFLMRDIQSIRIQVKEGLFPRRILYMEIRGQGAIPLTRTDEKFFTPREIEQKAAELAYFLRIPMEVF.

2 helical membrane passes run 20-40 (GNFF…AVGA) and 57-77 (ILFF…LFIS).

It belongs to the Ycf4 family.

It is found in the plastid. Its subcellular location is the chloroplast thylakoid membrane. Its function is as follows. Seems to be required for the assembly of the photosystem I complex. The chain is Photosystem I assembly protein Ycf4 from Oryza nivara (Indian wild rice).